The primary structure comprises 366 residues: MQACAVIAEFNPFHNGHQYLLEQARKVTKADLVIVIMSGNFVQRGEPALINKWERARVAINCGADLVVEIPTEYAIDSAKEFAHAGVEIAQKLGASFLAFGSENPDLDFENESKILDRQFDQRAKKYNQNFAAQLFDDTAIMNSNDILGINYAYWNSKSKRGLQLIPLQREQADHRDTEIKGSIASASAIRRAALEQSEYFNAVPKASLKAIRNAKLTSWEDFWIMLNYRLLTSTPQELRHIKGVTEGFENRILNLVDKSNSFTELMQKLKTKRYTYTRIQRSLTNILLNIQATPFNLTKTRLLATNQLGRIFIREAALGSVVMTKVTKEDFENNYAITKRADDLYQLVSPYQWGKGPIIKKNVKE.

Residues 7–20, Gly101, Asn145, and Arg170 contribute to the ATP site; that span reads IAEF…HQYL.

The protein belongs to the TmcAL family.

The protein resides in the cytoplasm. It catalyses the reaction cytidine(34) in elongator tRNA(Met) + acetate + ATP = N(4)-acetylcytidine(34) in elongator tRNA(Met) + AMP + diphosphate. In terms of biological role, catalyzes the formation of N(4)-acetylcytidine (ac(4)C) at the wobble position of elongator tRNA(Met), using acetate and ATP as substrates. First activates an acetate ion to form acetyladenylate (Ac-AMP) and then transfers the acetyl group to tRNA to form ac(4)C34. The polypeptide is tRNA(Met) cytidine acetate ligase (Pediococcus pentosaceus (strain ATCC 25745 / CCUG 21536 / LMG 10740 / 183-1w)).